The chain runs to 311 residues: Aspartate carbamoyltransferase catalytic subunit (311 aa).

Arg55 and Thr56 together coordinate carbamoyl phosphate. Lys85 serves as a coordination point for L-aspartate. Carbamoyl phosphate contacts are provided by Arg106, His135, and Gln138. Arg168 and Arg230 together coordinate L-aspartate. Carbamoyl phosphate contacts are provided by Leu268 and Pro269.

The protein belongs to the aspartate/ornithine carbamoyltransferase superfamily. ATCase family. Heterododecamer (2C3:3R2) of six catalytic PyrB chains organized as two trimers (C3), and six regulatory PyrI chains organized as three dimers (R2).

The enzyme catalyses carbamoyl phosphate + L-aspartate = N-carbamoyl-L-aspartate + phosphate + H(+). The protein operates within pyrimidine metabolism; UMP biosynthesis via de novo pathway; (S)-dihydroorotate from bicarbonate: step 2/3. Functionally, catalyzes the condensation of carbamoyl phosphate and aspartate to form carbamoyl aspartate and inorganic phosphate, the committed step in the de novo pyrimidine nucleotide biosynthesis pathway. This Escherichia coli (strain 55989 / EAEC) protein is Aspartate carbamoyltransferase catalytic subunit.